Here is a 224-residue protein sequence, read N- to C-terminus: LexA repressor (224 aa).

Residues 31-51 (RAEIATELGFRSANAAEEHLQ) constitute a DNA-binding region (H-T-H motif). Residues S142 and K179 each act as for autocatalytic cleavage activity in the active site.

The protein belongs to the peptidase S24 family. Homodimer.

The catalysed reaction is Hydrolysis of Ala-|-Gly bond in repressor LexA.. In terms of biological role, represses a number of genes involved in the response to DNA damage (SOS response), including recA and lexA. In the presence of single-stranded DNA, RecA interacts with LexA causing an autocatalytic cleavage which disrupts the DNA-binding part of LexA, leading to derepression of the SOS regulon and eventually DNA repair. The sequence is that of LexA repressor from Albidiferax ferrireducens (strain ATCC BAA-621 / DSM 15236 / T118) (Rhodoferax ferrireducens).